The primary structure comprises 200 residues: Imidazoleglycerol-phosphate dehydratase (200 aa).

The protein belongs to the imidazoleglycerol-phosphate dehydratase family.

It localises to the cytoplasm. It catalyses the reaction D-erythro-1-(imidazol-4-yl)glycerol 3-phosphate = 3-(imidazol-4-yl)-2-oxopropyl phosphate + H2O. It functions in the pathway amino-acid biosynthesis; L-histidine biosynthesis; L-histidine from 5-phospho-alpha-D-ribose 1-diphosphate: step 6/9. The sequence is that of Imidazoleglycerol-phosphate dehydratase from Bifidobacterium animalis subsp. lactis (strain AD011).